The primary structure comprises 419 residues: Hyaluronan synthase (419 aa).

Transmembrane regions (helical) follow at residues 8–28 (LIVL…MYLF), 33–53 (VGIY…LSFL), 318–338 (IVAL…VAIG), 345–365 (AIQL…IVAL), and 376–396 (PASF…LQPL).

Belongs to the NodC/HAS family. It depends on Mg(2+) as a cofactor.

The protein localises to the cell membrane. The catalysed reaction is [hyaluronan](n) + UDP-N-acetyl-alpha-D-glucosamine = N-acetyl-beta-D-glucosaminyl-(1-&gt;4)-[hyaluronan](n) + UDP + H(+). The enzyme catalyses N-acetyl-beta-D-glucosaminyl-(1-&gt;4)-[hyaluronan](n) + UDP-alpha-D-glucuronate = [hyaluronan](n+1) + UDP + H(+). Its pathway is glycan biosynthesis; hyaluronan biosynthesis. Functionally, glycosaminoglycan synthesis. The hyaluronic acid capsule is involved in the pathogenicity of group A Streptococci; it may be the major virulence determinant. This is Hyaluronan synthase (hasA) from Streptococcus pyogenes serotype M18 (strain MGAS8232).